The primary structure comprises 304 residues: Killer cell immunoglobulin-like receptor 2DS1 (304 aa).

The first 21 residues, 1–21 (MSLTVVSMACVGFFLLQGAWP), serve as a signal peptide directing secretion. Over 22 to 245 (HEGVHRKPSL…SETGNPRHLH (224 aa)) the chain is Extracellular. Ig-like C2-type domains are found at residues 42-107 (EETV…VTHS) and 142-205 (GENV…FRDS). The cysteines at positions 49 and 100 are disulfide-linked. N-linked (GlcNAc...) asparagine glycosylation is found at Asn-67, Asn-84, Asn-144, and Asn-178. A disulfide bond links Cys-149 and Cys-198. Positions 220–239 (VTGNPSNSWPSPTEPSSETG) are disordered. Residues 223–239 (NPSNSWPSPTEPSSETG) show a composition bias toward low complexity. A helical membrane pass occupies residues 246–264 (VLIGTSVVKIPFTILLFFL). The Cytoplasmic portion of the chain corresponds to 265-304 (LHRWCSDKKNAAVMDQEPAGNRTVNSEDSDEQDHQEVSYA). Residues 280–304 (QEPAGNRTVNSEDSDEQDHQEVSYA) are disordered.

It belongs to the immunoglobulin superfamily. Interacts with the adapter protein TYROBP/DAP12; the interaction enhances KIR2DS1 stability at the cell surface. Expressed by NK cells.

The protein resides in the cell membrane. Its function is as follows. Receptor on natural killer (NK) cells for some HLA-C alleles such as w6. Does not inhibit the activity of NK cells. The protein is Killer cell immunoglobulin-like receptor 2DS1 of Homo sapiens (Human).